Reading from the N-terminus, the 181-residue chain is Adenylate kinase (181 aa).

10 to 15 (GAGKGT) contributes to the ATP binding site. Residues 30–59 (STGELFRKNIQDGTKLGVEAKRYLDAGDLV) are NMP. AMP is bound by residues T31, R36, 57-59 (DLV), 85-88 (GYPR), and Q92. The LID stretch occupies residues 126 to 132 (GRGRADD). Position 127 (R127) interacts with ATP. Residues R129 and R140 each contribute to the AMP site. G166 is an ATP binding site.

This sequence belongs to the adenylate kinase family. As to quaternary structure, monomer.

The protein localises to the cytoplasm. It catalyses the reaction AMP + ATP = 2 ADP. Its pathway is purine metabolism; AMP biosynthesis via salvage pathway; AMP from ADP: step 1/1. Its function is as follows. Catalyzes the reversible transfer of the terminal phosphate group between ATP and AMP. Plays an important role in cellular energy homeostasis and in adenine nucleotide metabolism. The sequence is that of Adenylate kinase from Mycobacterium ulcerans (strain Agy99).